The primary structure comprises 217 residues: Small ribosomal subunit protein uS3 (217 aa).

The region spanning I40–R110 is the KH type-2 domain.

The protein belongs to the universal ribosomal protein uS3 family. As to quaternary structure, part of the 30S ribosomal subunit. Forms a tight complex with proteins S10 and S14.

Binds the lower part of the 30S subunit head. Binds mRNA in the 70S ribosome, positioning it for translation. The chain is Small ribosomal subunit protein uS3 from Rickettsia canadensis (strain McKiel).